Here is a 307-residue protein sequence, read N- to C-terminus: Dihydroorotate dehydrogenase B (NAD(+)), catalytic subunit (307 aa).

FMN contacts are provided by residues S22 and 46–47; that span reads KT. Substrate-binding positions include K46, 70–74, and N128; that span reads NAVGL. Residue N128 participates in FMN binding. Residue C131 is the Nucleophile of the active site. 2 residues coordinate FMN: K166 and I192. 193-194 lines the substrate pocket; the sequence is NT. FMN contacts are provided by residues G218, 244–245, and 266–267; these read GG and GT.

This sequence belongs to the dihydroorotate dehydrogenase family. Type 1 subfamily. As to quaternary structure, heterotetramer of 2 PyrK and 2 PyrD type B subunits. Requires FMN as cofactor.

Its subcellular location is the cytoplasm. It catalyses the reaction (S)-dihydroorotate + NAD(+) = orotate + NADH + H(+). It participates in pyrimidine metabolism; UMP biosynthesis via de novo pathway; orotate from (S)-dihydroorotate (NAD(+) route): step 1/1. In terms of biological role, catalyzes the conversion of dihydroorotate to orotate with NAD(+) as electron acceptor. The sequence is that of Dihydroorotate dehydrogenase B (NAD(+)), catalytic subunit (pyrD) from Desulforudis audaxviator (strain MP104C).